The chain runs to 268 residues: 4-hydroxy-tetrahydrodipicolinate reductase (268 aa).

Residues 9-14 (GVCGRM), glutamate 35, 99-101 (GTT), and 123-126 (APNY) contribute to the NAD(+) site. Residue histidine 156 is the Proton donor/acceptor of the active site. Residue histidine 157 participates in (S)-2,3,4,5-tetrahydrodipicolinate binding. Lysine 160 functions as the Proton donor in the catalytic mechanism. 166–167 (GT) is a (S)-2,3,4,5-tetrahydrodipicolinate binding site.

The protein belongs to the DapB family.

The protein resides in the cytoplasm. The enzyme catalyses (S)-2,3,4,5-tetrahydrodipicolinate + NAD(+) + H2O = (2S,4S)-4-hydroxy-2,3,4,5-tetrahydrodipicolinate + NADH + H(+). The catalysed reaction is (S)-2,3,4,5-tetrahydrodipicolinate + NADP(+) + H2O = (2S,4S)-4-hydroxy-2,3,4,5-tetrahydrodipicolinate + NADPH + H(+). It functions in the pathway amino-acid biosynthesis; L-lysine biosynthesis via DAP pathway; (S)-tetrahydrodipicolinate from L-aspartate: step 4/4. Functionally, catalyzes the conversion of 4-hydroxy-tetrahydrodipicolinate (HTPA) to tetrahydrodipicolinate. This is 4-hydroxy-tetrahydrodipicolinate reductase from Magnetococcus marinus (strain ATCC BAA-1437 / JCM 17883 / MC-1).